The chain runs to 772 residues: Rho guanine nucleotide exchange factor 6 (772 aa).

A Calponin-homology (CH) domain is found at 1 to 111 (MNPEERVVTW…TLLAVNKATE (111 aa)). Residues 115–158 (SERPCGRSSSLSATTSSQTNPQAAVPSTTPEQQSEEKAAEMTEN) form a disordered region. Low complexity predominate over residues 122–133 (SSSLSATTSSQT). Ser126 is modified (phosphoserine). A Phosphothreonine modification is found at Thr133. A compositionally biased stretch (polar residues) spans 134–146 (NPQAAVPSTTPEQ). One can recognise an SH3 domain in the interval 160–219 (SHQLIVKARFNFKQTNEDELSVCKGDIIYVTRVEEGGWWEGTLNGRTGWFPSNYVREIKP). A Phosphoserine modification is found at Ser225. The region spanning 241 to 421 (YYTVVLQNIL…KSLMGQCQDL (181 aa)) is the DH domain. Residues 443-548 (DIKTLGNVIF…WMEQLNRLTK (106 aa)) enclose the PH domain. At Ser488 the chain carries Phosphoserine. Low complexity predominate over residues 557 to 573 (SKTSSSSCSTHSSFSST). A disordered region spans residues 557–581 (SKTSSSSCSTHSSFSSTGQPRGPLE). Phosphoserine occurs at positions 640 and 680.

As to quaternary structure, interacts with PAK kinases through the SH3 domain. Interacts with GIT1. Interacts with PARVB. Component of cytoplasmic complexes, which also contain PXN, GIT1 and PAK1. Interacts with BIN2. Identified in a complex with BIN2 and GIT2. Interacts with PARVG; the guanine nucleotide exchange factor activity of ARHGEF6 is essential for PARVG-induced enhancement of cell spreading.

The protein resides in the cell projection. It is found in the lamellipodium. Its function is as follows. Acts as a RAC1 guanine nucleotide exchange factor (GEF). The sequence is that of Rho guanine nucleotide exchange factor 6 (Arhgef6) from Rattus norvegicus (Rat).